We begin with the raw amino-acid sequence, 254 residues long: Allene oxide cyclase 1, chloroplastic (254 aa).

A chloroplast-targeting transit peptide spans 1–78 (MASSTISLQS…QNLGNTENPR (78 aa)). A compositionally biased stretch (low complexity) spans 44-56 (SNGPGSSSPTSFT). The interval 44–79 (SNGPGSSSPTSFTPKKKLTPTRALSQNLGNTENPRP) is disordered. Polar residues predominate over residues 65-77 (RALSQNLGNTENP).

This sequence belongs to the allene oxide cyclase family. In terms of tissue distribution, highly expressed in fully developed leaves.

It localises to the plastid. Its subcellular location is the chloroplast. The enzyme catalyses (9Z,13S,15Z)-12,13-epoxyoctadeca-9,11,15-trienoate = (9S,13S,15Z)-12-oxophyto-10,15-dienoate. Functionally, involved in the production of 12-oxo-phytodienoic acid (OPDA), a precursor of jasmonic acid. The chain is Allene oxide cyclase 1, chloroplastic (AOC1) from Arabidopsis thaliana (Mouse-ear cress).